A 195-amino-acid polypeptide reads, in one-letter code: Probable WRKY transcription factor 56 (195 aa).

Positions 1–10 are enriched in polar residues; it reads MEGVDNTNPM. Disordered regions lie at residues 1-20 and 70-93; these read MEGV…ENNN and EMGG…KGKG. The WRKY DNA-binding region spans 108–173; that stretch reads SDDDVLDDGY…YEGVHNHPCE (66 aa).

This sequence belongs to the WRKY group II-c family.

It is found in the nucleus. In terms of biological role, transcription factor. Interacts specifically with the W box (5'-(T)TGAC[CT]-3'), a frequently occurring elicitor-responsive cis-acting element. The sequence is that of Probable WRKY transcription factor 56 (WRKY56) from Arabidopsis thaliana (Mouse-ear cress).